The following is a 1378-amino-acid chain: Carboxypeptidase D (1378 aa).

The signal sequence occupies residues 1–37 (MASGWDERPPWRLESLRLLPPPPLLLLLLLLRSSAQA). Residues 38-1297 (AHIKKAEATT…DNRIFGLPRE (1260 aa)) are Extracellular-facing. One can recognise a Peptidase M14 1 domain in the interval 62–380 (HYYHEAALGE…ESLITLIEKV (319 aa)). Zn(2+) is bound by residues histidine 139 and glutamate 142. The short motif at 162–164 (RGD) is the Cell attachment site element. Asparagine 172 and asparagine 217 each carry an N-linked (GlcNAc...) asparagine glycan. The segment at 189-232 (RAREGDCGLGDSGPPGTSGRDNSRGRDLNRSFPDQFSTGEPPSL) is disordered. Residue histidine 257 coordinates Zn(2+). Tyrosine 265 is subject to Phosphotyrosine. The residue at position 270 (serine 270) is a Phosphoserine. Glutamate 350 serves as the catalytic Proton donor/acceptor. N-linked (GlcNAc...) asparagine glycans are attached at residues asparagine 399, asparagine 410, asparagine 429, and asparagine 522. Residues 502 to 792 (HHHHFPDMEI…RSLIQFMKQV (291 aa)) enclose the Peptidase M14 2 domain. Zn(2+)-binding residues include histidine 564 and glutamate 567. A glycan (N-linked (GlcNAc...) asparagine) is linked at asparagine 626. Histidine 671 contacts Zn(2+). Residue glutamate 762 is the Proton donor/acceptor of the active site. 6 N-linked (GlcNAc...) asparagine glycosylation sites follow: asparagine 811, asparagine 855, asparagine 867, asparagine 879, asparagine 953, and asparagine 976. A disordered region spans residues 875 to 898 (TDANNESKKGKGHSTSTDDTSDPT). One can recognise a Peptidase M14 3 domain in the interval 930–1209 (RYHSYKDLSE…KSLLSMLVEV (280 aa)). Positions 1039–1048 (RERAQEKDCT) are enriched in basic and acidic residues. The segment at 1039 to 1068 (RERAQEKDCTSKTGHTNARGRDLDTDFTSN) is disordered. Residues asparagine 1068 and asparagine 1140 are each glycosylated (N-linked (GlcNAc...) asparagine). A helical transmembrane segment spans residues 1298-1318 (LVVTVSGATMSALILTACIIW). S-palmitoyl cysteine attachment occurs at residues cysteine 1315, cysteine 1319, and cysteine 1321. Residues 1319–1378 (CICSIKSNRHKDGFHRLRQHHDEYEDEIRMMSTGSKKSLLSHEFQDETDTEEETLYSSKH) lie on the Cytoplasmic side of the membrane. Phosphoserine occurs at positions 1356 and 1359. The disordered stretch occupies residues 1357–1378 (LLSHEFQDETDTEEETLYSSKH). 2 positions are modified to phosphothreonine: threonine 1366 and threonine 1368.

Belongs to the peptidase M14 family. Requires Zn(2+) as cofactor. In terms of tissue distribution, isoform 1 is widely expressed with highest levels in the hippocampus, spinal cord, atrium, colon, testis and ovaries. Detected in the liver of females but not males. Isoform 2 is not detected in brain or lung.

The protein localises to the cell membrane. It is found in the nucleus. The catalysed reaction is Releases C-terminal Arg and Lys from polypeptides.. This Rattus norvegicus (Rat) protein is Carboxypeptidase D.